The chain runs to 450 residues: UDP-N-acetylmuramoylalanine--D-glutamate ligase (450 aa).

Residue G119 to T125 participates in ATP binding.

It belongs to the MurCDEF family.

It is found in the cytoplasm. The enzyme catalyses UDP-N-acetyl-alpha-D-muramoyl-L-alanine + D-glutamate + ATP = UDP-N-acetyl-alpha-D-muramoyl-L-alanyl-D-glutamate + ADP + phosphate + H(+). It participates in cell wall biogenesis; peptidoglycan biosynthesis. In terms of biological role, cell wall formation. Catalyzes the addition of glutamate to the nucleotide precursor UDP-N-acetylmuramoyl-L-alanine (UMA). This Lactococcus lactis subsp. lactis (strain IL1403) (Streptococcus lactis) protein is UDP-N-acetylmuramoylalanine--D-glutamate ligase.